The sequence spans 500 residues: Cryptochrome DASH (500 aa).

A Photolyase/cryptochrome alpha/beta domain is found at 4-138 (KTVLVWYRND…PVRSFWGTTL (135 aa)).

This sequence belongs to the DNA photolyase class-1 family. The cofactor is FAD. (6R)-5,10-methylene-5,6,7,8-tetrahydrofolate is required as a cofactor.

Its function is as follows. May have a photoreceptor function. Binds DNA; probably functions as a transcriptional repressor. This Gloeobacter violaceus (strain ATCC 29082 / PCC 7421) protein is Cryptochrome DASH (cry).